A 312-amino-acid polypeptide reads, in one-letter code: Protein Rep40 (312 aa).

The SF3 helicase domain maps to 84-239; the sequence is DPQYAASVFL…LDHDFGKVTK (156 aa). 110–117 is a binding site for ATP; the sequence is GPATTGKT. A disordered region spans residues 264-301; sequence KGGAKKRPAPSDADISEPKRVRESVAQPSTSDAEASIN.

As to quaternary structure, homooligomer.

It localises to the host nucleus. The catalysed reaction is ATP + H2O = ADP + phosphate + H(+). Plays a critical role during packaging of viral DNA into empty capsids, where they are thought to be part of the packaging motor complex. The single stranded genomic DNA is packaged in a 3' to 5' direction and requires the association of viral DNA with Rep40. This chain is Protein Rep40 (Rep40), found in Mammalia (AAV-2).